A 64-amino-acid polypeptide reads, in one-letter code: Arasin 1 (64 aa).

An N-terminal signal peptide occupies residues 1–25 (MERRTLLVVLLVCSCVVAAAAEASP). The tract at residues 22–43 (EASPSRWPSPGRPRPFPGRPKP) is disordered. The interval 26–48 (SRWPSPGRPRPFPGRPKPIFRPR) is pro/Arg-rich region responsible for antibacterial and antifungal activity. The segment covering 31 to 43 (PGRPRPFPGRPKP) has biased composition (pro residues). Residues 49–62 (PCNCYAPPCPCDRW) are cystein-containing C-terminal region important for stability but not essential for antimicrobial activity. Intrachain disulfides connect Cys50/Cys59 and Cys52/Cys57. Residues 63–64 (RH) constitute a propeptide that is removed on maturation.

As to quaternary structure, interacts with chitin through the N-terminal region (26-48). This interaction may be important, since chitin is a component of the fungal cell wall, as well as of the crab exoskeleton (permitting a possible action of arasin in wound healing in case of lesions). In terms of processing, disulfide bonds are important for activity especially against Gram-negative bacteria, since the linearization of the peptide causes a strong decrease of activity on these bacteria. As to expression, mainly expressed in hemocytes. No or very low expression in heart, gills, inestines, and epidermis.

In terms of biological role, antimicrobial peptide that has a large activity spectrum with activity against Gram-positive, Gram-negative bacteria, as well as against fungi. Shows activity at micromolar concentrations. Displays minimal inhibitory concentration (MIC) values lower than minimal bactericidal concentrations (MBC). Synthetic peptides with similar activities than the full length peptide (composed of the first 23 or 25 amino acids (Arasin 1(26-48) or Arasin 1(26-50))) may have a dual mode of action depending on the peptide concentrations. At MIC concentrations, the peptide penetrates into the cytoplasm of target cells (tested on the Gram-negative E.coli). The two inner membrane proteins YgdD and SbmA may be required for this uptake. At concentrations higher than MIC, arasin may act by disrupting membranes. Full-length and N-terminal peptides do not show hemolytic activity. The protein is Arasin 1 of Hyas araneus (Atlantic lyre crab).